We begin with the raw amino-acid sequence, 134 residues long: Snaclec alboaggregin-A subunit alpha' (134 aa).

A C-type lectin domain is found at D1–Q134. Intrachain disulfides connect C4–C15, C32–C129, and C104–C121.

It belongs to the snaclec family. Heterotetramer of the subunits alpha, alpha', beta and beta'; disulfide-linked. In terms of tissue distribution, expressed by the venom gland.

The protein resides in the secreted. In terms of biological role, potent platelet activator that aggregates platelets via both GPIbalpha (GP1BA) and GPVI (GP6). Induces a tyrosine phosphorylation profile in platelets that resembles this produced by collagen, involving the time dependent tyrosine phosphorylation of Fc receptor gamma chain (FCGR1A), phospholipase Cgamma2 (PLCG2), and LAT. The protein is Snaclec alboaggregin-A subunit alpha' of Trimeresurus albolabris (White-lipped pit viper).